The primary structure comprises 211 residues: Ribosomal RNA large subunit methyltransferase E (211 aa).

Residues G60, W62, D85, D101, and D126 each contribute to the S-adenosyl-L-methionine site. The active-site Proton acceptor is the K166.

Belongs to the class I-like SAM-binding methyltransferase superfamily. RNA methyltransferase RlmE family.

It is found in the cytoplasm. The catalysed reaction is uridine(2552) in 23S rRNA + S-adenosyl-L-methionine = 2'-O-methyluridine(2552) in 23S rRNA + S-adenosyl-L-homocysteine + H(+). Functionally, specifically methylates the uridine in position 2552 of 23S rRNA at the 2'-O position of the ribose in the fully assembled 50S ribosomal subunit. The sequence is that of Ribosomal RNA large subunit methyltransferase E from Bordetella petrii (strain ATCC BAA-461 / DSM 12804 / CCUG 43448).